The primary structure comprises 545 residues: MTKKLSLELRQTRKPIQTACGFCHEKHLQCDVGRPCQNCRKRNIASFCRDKVKRRRKRKRSDASNFDKDEAATQTLNFNTVNPGEGSSSAMTQDEKNTGTTTATTTRTTTNFRSESKASSSTENISRAMKDPADTIIANSLLDKPTIGDTDDTGWGFGSIWTNDEYMTLNDLTSFASESMPNQLGPIEEQRSPRRTLGEPLARRYDSSQPFQYLNFGSKLHKTDSRPYISLEQPGNVPSIPAFTMNKGSNDEDASPQQKESQQMQLWQQQASQLQQQASQLQQQASQLQQQRTQQNEPVSEWTPFQLRLLIKTPKDLFDKKNLVKPHNYRKAYKDLLECLHKMFLGSYYRRQNGRWRPVSDDEDQMRRRLMRKEQLQHIAKSIGELYMPKFVALTSNMIEEDLLLQELVLQRSLLELENMSKLVNCTPICIWRRSGEICFVSNEFCSLTGFYKREILDQRRFIVEFMDHQSVVSYYDLFHEHLAFGPKDSTRTILNKDQAVYTECNLLLNNGSYLKCACCLTARRDAFNISLLLMGQFLPIFDVQ.

Residues 20–48 constitute a DNA-binding region (zn(2)-C6 fungal-type); the sequence is CGFCHEKHLQCDVGRPCQNCRKRNIASFC. Basic residues predominate over residues 51–60; it reads KVKRRRKRKR. 2 disordered regions span residues 51–131 and 228–270; these read KVKR…AMKD and YISL…WQQQ. Positions 61-71 are enriched in basic and acidic residues; it reads SDASNFDKDEA. Polar residues predominate over residues 72–92; it reads ATQTLNFNTVNPGEGSSSAMT. Over residues 98–110 the composition is skewed to low complexity; it reads TGTTTATTTRTTT. Positions 111 to 125 are enriched in polar residues; that stretch reads NFRSESKASSSTENI. Over residues 257 to 270 the composition is skewed to low complexity; sequence QQKESQQMQLWQQQ. A PAS domain is found at 416 to 486; that stretch reads ELENMSKLVN…DLFHEHLAFG (71 aa).

It belongs to the ERT1/acuK family.

It is found in the nucleus. Transcription factor which regulates nonfermentable carbon utilization. The polypeptide is Glucose starvation modulator protein 1 (GSM1) (Zygosaccharomyces rouxii (strain ATCC 2623 / CBS 732 / NBRC 1130 / NCYC 568 / NRRL Y-229)).